Here is a 589-residue protein sequence, read N- to C-terminus: Probable ATP-dependent RNA helicase DDX59 (589 aa).

2 disordered regions span residues 1–36 (MFVP…QLEG) and 48–98 (KEAV…SKTQ). Positions 12-27 (NSNDDLKSCEAKKSKP) are enriched in basic and acidic residues. Residue Lys-26 forms a Glycyl lysine isopeptide (Lys-Gly) (interchain with G-Cter in SUMO2) linkage. Phosphoserine is present on Ser-64. The span at 80 to 91 (GVKDSHPSEEPV) shows a compositional bias: basic and acidic residues. The HIT-type zinc finger occupies 104-133 (GEPVCVVCGRYGEYICDKTDEDVCSLECKA). Phosphoserine occurs at positions 156 and 160. The Q motif motif lies at 203 to 231 (IDFEHCGFPETLNQNLKKSGYEVPTPIQM). Residues 234–375 (IPVGLLGRDI…DQLLHNPVRI (142 aa)) enclose the Helicase ATP-binding domain. Residue 247-254 (ADTGSGKT) coordinates ATP. Positions 323–326 (VKAD) match the DEAD box motif. The 151-residue stretch at 399 to 549 (KKKKLFEILN…ILPPQLLNSP (151 aa)) folds into the Helicase C-terminal domain.

The protein belongs to the DEAD box helicase family. DDX59 subfamily. Interacts (via HIT-type zinc finger) with the RUVBL1/RUVBL2 complex in the presence of ADP.

It is found in the cytoplasm. The protein resides in the nucleus. The enzyme catalyses ATP + H2O = ADP + phosphate + H(+). This Rattus norvegicus (Rat) protein is Probable ATP-dependent RNA helicase DDX59 (Ddx59).